We begin with the raw amino-acid sequence, 298 residues long: Aspartate carbamoyltransferase catalytic subunit (298 aa).

Carbamoyl phosphate is bound by residues R50 and T51. K79 serves as a coordination point for L-aspartate. Positions 100, 128, and 131 each coordinate carbamoyl phosphate. L-aspartate contacts are provided by R160 and R221. 2 residues coordinate carbamoyl phosphate: L260 and P261.

It belongs to the aspartate/ornithine carbamoyltransferase superfamily. ATCase family. In terms of assembly, heterooligomer of catalytic and regulatory chains.

The enzyme catalyses carbamoyl phosphate + L-aspartate = N-carbamoyl-L-aspartate + phosphate + H(+). The protein operates within pyrimidine metabolism; UMP biosynthesis via de novo pathway; (S)-dihydroorotate from bicarbonate: step 2/3. Its function is as follows. Catalyzes the condensation of carbamoyl phosphate and aspartate to form carbamoyl aspartate and inorganic phosphate, the committed step in the de novo pyrimidine nucleotide biosynthesis pathway. This chain is Aspartate carbamoyltransferase catalytic subunit, found in Methanoculleus marisnigri (strain ATCC 35101 / DSM 1498 / JR1).